Here is an 83-residue protein sequence, read N- to C-terminus: Putative potassium channel toxin Ts20 (83 aa).

Positions 1-18 (MKLDIVLIMFVTFSTTLA) are cleaved as a signal peptide.

Contains 3 disulfide bonds. Expressed by the venom gland.

It is found in the secreted. Functionally, reversibly inhibits potassium channels. The sequence is that of Putative potassium channel toxin Ts20 from Tityus serrulatus (Brazilian scorpion).